We begin with the raw amino-acid sequence, 128 residues long: Large-conductance mechanosensitive channel (128 aa).

The next 2 helical transmembrane spans lie at 10–30 (FAMR…GAFG) and 76–96 (GMFI…FLMI).

The protein belongs to the MscL family. As to quaternary structure, homopentamer.

The protein resides in the cell inner membrane. In terms of biological role, channel that opens in response to stretch forces in the membrane lipid bilayer. May participate in the regulation of osmotic pressure changes within the cell. The chain is Large-conductance mechanosensitive channel from Actinobacillus succinogenes (strain ATCC 55618 / DSM 22257 / CCUG 43843 / 130Z).